An 89-amino-acid chain; its full sequence is MKTLLLTLVVVTIVCLDLGYTMQCKTCSFYTCPNSETCPDGKNICVKRSWTAVAGDGLKREIRRECAATCPPSKLGLTVFCCTTDNCNH.

The first 21 residues, 1 to 21, serve as a signal peptide directing secretion; it reads MKTLLLTLVVVTIVCLDLGYT. Disulfide bonds link cysteine 24–cysteine 45, cysteine 27–cysteine 32, cysteine 38–cysteine 66, cysteine 70–cysteine 81, and cysteine 82–cysteine 87.

Belongs to the three-finger toxin family. Ancestral subfamily. Orphan group V sub-subfamily. As to expression, expressed by the venom gland.

Its subcellular location is the secreted. Exhibits M2 muscarinic acetylcholine receptor (CHRM2)-blocking activity, but has a weak binding activity toward nicotinic AChR. Moreover, it inhibits collagen-induced platelet aggregation. The protein is Long neurotoxin homolog TA-bm16 of Bungarus multicinctus (Many-banded krait).